The following is a 207-amino-acid chain: Ras-related protein Rab-8B (207 aa).

Ser-17, Gly-18, Val-19, Gly-20, Lys-21, Thr-22, Cys-23, Thr-35, Ser-39, and Thr-40 together coordinate GTP. Mg(2+) is bound at residue Thr-22. 2 consecutive short sequence motifs (switch) follow at residues 31–45 (DAFN…GIDF) and 63–80 (DTAG…YYRG). Residues Thr-40 and Asp-63 each contribute to the Mg(2+) site. Gly-66 lines the GTP pocket. Thr-72 carries the phosphothreonine modification. GTP contacts are provided by Asn-121, Lys-122, Asp-124, Ala-152, and Lys-153. Ser-180 bears the Phosphoserine mark. Cys-204 bears the Cysteine methyl ester mark. Cys-204 carries S-geranylgeranyl cysteine lipidation. A propeptide spans 205–207 (LLL) (removed in mature form).

The protein belongs to the small GTPase superfamily. Rab family. In terms of assembly, associated with actin, delta-catenin and alpha and beta tubulins. Interacts with OTOF. Interacts with PEX5R. Interacts with RAB3IP. Interacts with VIM. Interacts with CDH1. Interacts with MICALL2. Interacts with GDI1, GDI2, CHML and CHM; phosphorylation at Thr-72 disrupts these interactions. Interacts with MICAL1. Mg(2+) serves as cofactor. Post-translationally, phosphorylation of Thr-72 in the switch II region by LRRK2 prevents the association of RAB regulatory proteins, including CHM, CHML and RAB GDP dissociation inhibitors GDI1 and GDI2.

The protein resides in the cell membrane. It is found in the cytoplasmic vesicle. It localises to the phagosome membrane. Its subcellular location is the endosome membrane. It catalyses the reaction GTP + H2O = GDP + phosphate + H(+). Regulated by guanine nucleotide exchange factors (GEFs) including RAB3IP/RABIN8 which promotes the exchange of bound GDP for free GTP. Regulated by GTPase activating proteins (GAPs) which increase the GTP hydrolysis activity. Inhibited by GDP dissociation inhibitors (GDIs). The small GTPases Rab are key regulators of intracellular membrane trafficking, from the formation of transport vesicles to their fusion with membranes. Rabs cycle between an inactive GDP-bound form and an active GTP-bound form that is able to recruit to membranes different sets of downstream effectors directly responsible for vesicle formation, movement, tethering and fusion. RAB8B may be involved in polarized vesicular trafficking and neurotransmitter release. May participate in cell junction dynamics in Sertoli cells. May also participate in the export of a subset of neosynthesized proteins through a Rab8-Rab10-Rab11-dependent endososomal export route. The polypeptide is Ras-related protein Rab-8B (RAB8B) (Pongo abelii (Sumatran orangutan)).